We begin with the raw amino-acid sequence, 374 residues long: Patatin-2-Kuras 1 (374 aa).

A signal peptide spans 1 to 11; the sequence is MILATTGSTCA. The region spanning 20–217 is the PNPLA domain; sequence LSIDGGGIKG…TVGDPALLSL (198 aa). The short motif at 24–29 is the GXGXXG element; sequence GGGIKG. Positions 63–67 match the GXSXG motif; that stretch reads GTSTG. Ser65 functions as the Nucleophile in the catalytic mechanism. N-linked (GlcNAc...) asparagine glycosylation is present at Asn103. Asp203 (proton acceptor) is an active-site residue. Residues 203-205 carry the DGA/G motif; sequence DGA. Positions 309–372 form a coiled coil; the sequence is ENALTGTTTE…DRKKLRANKA (64 aa).

The protein belongs to the patatin family. As to expression, tuber.

Its subcellular location is the vacuole. Its function is as follows. Probable lipolytic acyl hydrolase (LAH), an activity which is thought to be involved in the response of tubers to pathogens. The protein is Patatin-2-Kuras 1 (pat2-k1) of Solanum tuberosum (Potato).